A 509-amino-acid polypeptide reads, in one-letter code: Subtelomeric hrmA-associated cluster protein AFUB_078990 (509 aa).

Its function is as follows. Part of the subtelomeric hrmA-associated cluster (HAC) containing genes that alter the hyphal surface (such as reduced total chitin or increased beta-glucan exposure) and perturb inter-hyphal interactions within the developing biofilms, resulting in a loss of vertically aligned polarized growing filaments. Consequently, this hypoxia-typic morphotype (called H-MORPH) with altered biofilm architecture leads to increased hypoxia fitness, increased host inflammation, rapid disease progression, and mortality in a murine model of invasive aspergillosis. This is Subtelomeric hrmA-associated cluster protein AFUB_078990 from Aspergillus fumigatus (strain CBS 144.89 / FGSC A1163 / CEA10) (Neosartorya fumigata).